The sequence spans 582 residues: Histone deacetylase 9-B (582 aa).

Residues 146 to 195 (SNEVKQKLQEFLLSKSTKDITLNGIPQKITQSSKLWYTASHHTSLEQSSP) are interaction with mef2. The span at 189–205 (SLEQSSPPLGGASSSCK) shows a compositional bias: polar residues. Disordered regions lie at residues 189–254 (SLEQ…KEGN), 270–314 (TASS…QSRL), 409–447 (LSSG…RTQS), and 496–567 (VHLQ…NQSS). Composition is skewed to basic and acidic residues over residues 213-224 (DYRDDFPLRKTV) and 238-253 (KVAE…RKEG). Residues 270–289 (TASSSAPGSGPSSPNGACSA) show a composition bias toward low complexity. A compositionally biased stretch (polar residues) spans 295 to 314 (GPSSLPVTTRTERWPSQSRL).

The protein belongs to the histone deacetylase family. HD type 2 subfamily. Homodimer. Interacts with mef2.

It localises to the nucleus. It carries out the reaction N(6)-acetyl-L-lysyl-[histone] + H2O = L-lysyl-[histone] + acetate. Its function is as follows. Devoided of intrinsic deacetylase activity, promotes the deacetylation of lysine residues on the N-terminal part of the core histones (H2A, H2B, H3 and H4) by recruiting other histone deacetylases. Histone deacetylation gives a tag for epigenetic repression and plays an important role in transcriptional regulation, cell cycle progression and developmental events. Represses MEF2-dependent transcription. The protein is Histone deacetylase 9-B (hdac9b) of Danio rerio (Zebrafish).